The sequence spans 201 residues: Recombination protein RecR (201 aa).

The C4-type zinc-finger motif lies at 55 to 70 (CVCCGAFCEGRTCALC). Residues 78 to 173 (GIICVVERAQ…IVTRLASGIP (96 aa)) form the Toprim domain.

This sequence belongs to the RecR family.

In terms of biological role, may play a role in DNA repair. It seems to be involved in an RecBC-independent recombinational process of DNA repair. It may act with RecF and RecO. This is Recombination protein RecR from Treponema pallidum (strain Nichols).